Reading from the N-terminus, the 666-residue chain is Protein OS-9 (666 aa).

Positions 1 to 30 (MAAEALLSSLLGLLFLGLLLPAHLTGGVGS) are cleaved as a signal peptide. The region spanning 108 to 230 (APCLLKTKDW…SIRTSRLCPH (123 aa)) is the MRH domain. A disulfide bridge links cysteine 110 with cysteine 123. A mannooligosaccharide derivative-binding residues include tryptophan 117, tryptophan 118, and glutamine 130. The N-linked (GlcNAc...) asparagine glycan is linked to asparagine 177. Disulfide bonds link cysteine 181/cysteine 216 and cysteine 196/cysteine 228. A mannooligosaccharide derivative is bound by residues aspartate 182, arginine 188, glutamate 212, and tyrosine 218. 4 disordered regions span residues 261–356 (RQAE…NVQV), 370–449 (EELK…SDRE), 505–540 (ESQS…EHRV), and 631–666 (EANK…EFDF). Basic and acidic residues-rich tracts occupy residues 263–281 (AESK…DTDH) and 294–310 (PKKE…ESEF). Residues 320 to 332 (QATGTEEAQAGEQ) show a composition bias toward low complexity. Basic and acidic residues-rich tracts occupy residues 370–379 (EELKGAEKGK) and 395–412 (PQRE…RGLV). Acidic residues predominate over residues 413–429 (EEEDGDEEEEDEDEDEQ). Residues 434–449 (EFEKELEGMLLPSDRE) are compositionally biased toward basic and acidic residues. Over residues 631 to 646 (EANKERQRQSELESNY) the composition is skewed to basic and acidic residues. The segment covering 657-666 (DTGDLDEFDF) has biased composition (acidic residues).

The protein belongs to the OS-9 family. As to quaternary structure, component of the HRD1 complex, which comprises at least SYNV1/HRD1, DERL1/2, FAM8A1, HERPUD1/HERP, OS9, SEL1L and UBE2J1. FAM8A1 is stabilized by interaction with SYNV1, which prevents its proteasomal degradation. OS9 and UBE2J1 recruitment to the complex may be mediated by SEL1L. Through this complex, may interact with ERLEC1 and HSPA5. Interacts (via C-terminus) with CPNE6 (via second C2 domain); this interaction occurs in a calcium-dependent manner in vitro. Interacts with CREB3. Post-translationally, intramolecular disulfide bonds.

The protein localises to the endoplasmic reticulum lumen. Its function is as follows. Lectin component of the HRD1 complex, which functions in endoplasmic reticulum (ER) quality control and ER-associated degradation (ERAD). Specifically recognizes and binds improperly folded glycoproteins as well as hyperglycosylated proteins, retain them in the ER, and transfers them to the ubiquitination machinery and promote their degradation. Possible targets include TRPV4 as well as hyperglycosylated HSP90B1. The polypeptide is Protein OS-9 (Os9) (Rattus norvegicus (Rat)).